A 451-amino-acid chain; its full sequence is Probable metal transport system membrane protein CT_069 (451 aa).

Helical transmembrane passes span 14 to 34 (SFLAVSLICMTTALWGTILLV), 38 to 58 (PLLSESLSHACYPGLLIGALL), 70 to 90 (WVIIFFGCLASVLGCLGISFL), 100 to 120 (SALCLVLVSFFGVGVILVSYV), 145 to 165 (TEAKLALIIFCLSAVVLWWWY), 192 to 212 (VLVFISLVIVSGVRSVGILLI), 233 to 253 (ILILSSIFGGICGALGCYFSV), and 269 to 289 (ILPTGPLVVFFAGVLVFLCLI). Positions 432 to 451 (PDYDPHQREIPKRTRKSDGC) are disordered. Residues 434–451 (YDPHQREIPKRTRKSDGC) are compositionally biased toward basic and acidic residues.

Belongs to the ABC-3 integral membrane protein family.

It localises to the cell inner membrane. Functionally, part of an ATP-driven transport system CT_067/CT_068/CT_069/CT_070 for a metal. This Chlamydia trachomatis serovar D (strain ATCC VR-885 / DSM 19411 / UW-3/Cx) protein is Probable metal transport system membrane protein CT_069.